The chain runs to 134 residues: Cytochrome b (134 aa).

The next 3 helical transmembrane spans lie at 33–53 (FGSL…FLAM), 77–98 (WVLR…YVHV), and 113–133 (WNVG…GYVL). 2 residues coordinate heme b: His-83 and His-97.

Belongs to the cytochrome b family. The cytochrome bc1 complex contains 11 subunits: 3 respiratory subunits (MT-CYB, CYC1 and UQCRFS1), 2 core proteins (UQCRC1 and UQCRC2) and 6 low-molecular weight proteins (UQCRH/QCR6, UQCRB/QCR7, UQCRQ/QCR8, UQCR10/QCR9, UQCR11/QCR10 and a cleavage product of UQCRFS1). This cytochrome bc1 complex then forms a dimer. The cofactor is heme b.

It is found in the mitochondrion inner membrane. Component of the ubiquinol-cytochrome c reductase complex (complex III or cytochrome b-c1 complex) that is part of the mitochondrial respiratory chain. The b-c1 complex mediates electron transfer from ubiquinol to cytochrome c. Contributes to the generation of a proton gradient across the mitochondrial membrane that is then used for ATP synthesis. The protein is Cytochrome b (MT-CYB) of Anoura caudifer (Hairy-legged long-tongued bat).